The primary structure comprises 142 residues: MAP3K7 C-terminal-like protein (142 aa).

As to expression, ubiquitous.

In Mus musculus (Mouse), this protein is MAP3K7 C-terminal-like protein (Map3k7cl).